The primary structure comprises 307 residues: Ribosomal protein uL3 glutamine methyltransferase (307 aa).

Belongs to the protein N5-glutamine methyltransferase family. PrmB subfamily.

The catalysed reaction is L-glutaminyl-[ribosomal protein uL3] + S-adenosyl-L-methionine = N(5)-methyl-L-glutaminyl-[ribosomal protein uL3] + S-adenosyl-L-homocysteine + H(+). In terms of biological role, methylates large ribosomal subunit protein uL3 on a specific glutamine residue. The protein is Ribosomal protein uL3 glutamine methyltransferase of Burkholderia pseudomallei (strain K96243).